Reading from the N-terminus, the 527-residue chain is MSYPLEEVNKRRTFAIISHPDAGKTTITEKVLLYGNAIQTAGSVKGKGSAAHAKSDWMEMEKQRGISITTSVMQFPYNDCLVNLLDTPGHEDFSEDTYRTLTAVDSCLMVIDSAKGVEERTIKLMEVTRLRDTPIITFMNKLDRDIRDPMELLDEVENVLKIRCAPITWPIGCGKLFKGVYHLAKDETYLYQSGQGSTIQAVRVVKGLNNPELDVAVGDDLAQQLRDELELVQGASNEFEQDAFIKGELTPVFFGTALGNFGVDHFLDGLTQWAPKPQSRQADTRTVESAEEKFSGFVFKIQANMDPKHRDRVAFMRVVSGKYEKGMKLKHVRIGKDVVISDALTFMAGDRAHAEEAYAGDIIGLHNHGTIQIGDTFTQGETLKFTGIPNFAPELFRRIRLKDPLKQKQLLKGLVQLSEEGAVQVFRPLLNNDLIVGAVGVLQFDVVVSRLKTEYNVEAIYENVNVATARWVECADGKKFEEFKRKNEQNLALDGGDNLTYIAPTMVNLNLAQERYPDVVFYKTREH.

A tr-type G domain is found at N9 to Q278. GTP-binding positions include S18–T25, D86–H90, and N140–D143.

This sequence belongs to the TRAFAC class translation factor GTPase superfamily. Classic translation factor GTPase family. PrfC subfamily.

It localises to the cytoplasm. In terms of biological role, increases the formation of ribosomal termination complexes and stimulates activities of RF-1 and RF-2. It binds guanine nucleotides and has strong preference for UGA stop codons. It may interact directly with the ribosome. The stimulation of RF-1 and RF-2 is significantly reduced by GTP and GDP, but not by GMP. The protein is Peptide chain release factor 3 of Haemophilus influenzae (strain PittGG).